Consider the following 166-residue polypeptide: Putative 4-hydroxy-4-methyl-2-oxoglutarate aldolase (166 aa).

Residues 74-77 (GDQI) and R96 each bind substrate. D97 lines the a divalent metal cation pocket.

It belongs to the class II aldolase/RraA-like family. In terms of assembly, homotrimer. A divalent metal cation serves as cofactor.

The enzyme catalyses 4-hydroxy-4-methyl-2-oxoglutarate = 2 pyruvate. It carries out the reaction oxaloacetate + H(+) = pyruvate + CO2. Functionally, catalyzes the aldol cleavage of 4-hydroxy-4-methyl-2-oxoglutarate (HMG) into 2 molecules of pyruvate. Also contains a secondary oxaloacetate (OAA) decarboxylase activity due to the common pyruvate enolate transition state formed following C-C bond cleavage in the retro-aldol and decarboxylation reactions. The sequence is that of Putative 4-hydroxy-4-methyl-2-oxoglutarate aldolase from Xanthomonas axonopodis pv. citri (strain 306).